The chain runs to 279 residues: 3-methyl-2-oxobutanoate hydroxymethyltransferase (279 aa).

Positions 43 and 82 each coordinate Mg(2+). Residues 43–44 (DS), Asp-82, and Lys-112 contribute to the 3-methyl-2-oxobutanoate site. Glu-114 is a Mg(2+) binding site. The Proton acceptor role is filled by Glu-181.

Belongs to the PanB family. In terms of assembly, homodecamer; pentamer of dimers. Mg(2+) serves as cofactor.

It localises to the cytoplasm. It catalyses the reaction 3-methyl-2-oxobutanoate + (6R)-5,10-methylene-5,6,7,8-tetrahydrofolate + H2O = 2-dehydropantoate + (6S)-5,6,7,8-tetrahydrofolate. Its pathway is cofactor biosynthesis; (R)-pantothenate biosynthesis; (R)-pantoate from 3-methyl-2-oxobutanoate: step 1/2. Its function is as follows. Catalyzes the reversible reaction in which hydroxymethyl group from 5,10-methylenetetrahydrofolate is transferred onto alpha-ketoisovalerate to form ketopantoate. This chain is 3-methyl-2-oxobutanoate hydroxymethyltransferase, found in Shouchella clausii (strain KSM-K16) (Alkalihalobacillus clausii).